Here is a 167-residue protein sequence, read N- to C-terminus: HTH-type transcriptional repressor YetL (167 aa).

An HTH marR-type domain is found at 26–160 (SLELFLSLFD…FVKMLGDLFE (135 aa)). The segment at residues 74-97 (PTELAKRSNVTKATITGLLDGLAR) is a DNA-binding region (H-T-H motif).

In terms of assembly, homodimer. The N- and C-terminal helices from both subunits stabilize YetL dimer via extensive intersubunit interactions.

Binding to the yetM cis sequence is clearly inhibited by kaempferol, morin, apigenin and luteolin, slightly inhibited by quercetin and galangin, but no inhibition is observed with the other flavonoids. Flavonoid binding may induce conformational changes and modulate interaction with DNA. Its function is as follows. Negatively regulates yetM expression and its own expression. Binds specifically to corresponding single sites in the divergent yetL and yetM promoter regions, with higher affinity to the yetM region. Recognizes a 28-mer operator of double-stranded DNA that contains a palindromic sequence. The chain is HTH-type transcriptional repressor YetL (yetL) from Bacillus subtilis (strain 168).